The chain runs to 305 residues: Exosome complex component RRP45 (305 aa).

It belongs to the RNase PH family. Component of the RNA exosome complex. Specifically part of the catalytically inactive RNA exosome core complex (Exo-9) which may associate with the catalytic subunits RRP6 and DIS3 in cytoplasmic- and nuclear-specific RNA exosome complex forms. Exo-9 is formed by a hexameric base ring of RNase PH domain-containing subunits and a cap ring consisting of CSL4, RRP4 and RRP40. Interacts with LRP1.

Its subcellular location is the cytoplasm. The protein localises to the nucleus. It localises to the nucleolus. Functionally, non-catalytic component of the RNA exosome complex which has 3'-&gt;5' exoribonuclease activity and participates in a multitude of cellular RNA processing and degradation events. In the nucleus, the RNA exosome complex is involved in proper maturation of stable RNA species such as rRNA, snRNA and snoRNA, in the elimination of RNA processing by-products and non-coding 'pervasive' transcripts, such as antisense RNA species and cryptic unstable transcripts (CUTs), and of mRNAs with processing defects, thereby limiting or excluding their export to the cytoplasm. In the cytoplasm, the RNA exosome complex is involved in general mRNA turnover and in RNA surveillance pathways, preventing translation of aberrant mRNAs. The catalytic inactive RNA exosome core complex of 9 subunits (Exo-9) is proposed to play a pivotal role in the binding and presentation of RNA for ribonucleolysis, and to serve as a scaffold for the association with catalytic subunits and accessory proteins or complexes. RRP45 is part of the hexameric ring of RNase PH domain-containing subunits proposed to form a central channel which threads RNA substrates for degradation. The polypeptide is Exosome complex component RRP45 (RRP45) (Saccharomyces cerevisiae (strain ATCC 204508 / S288c) (Baker's yeast)).